The primary structure comprises 491 residues: Conidiogenone synthase PchP450 (491 aa).

Residues 2-22 traverse the membrane as a helical segment; that stretch reads LLLWFGFFSFVCGLVIYRLQF. Cys-430 lines the heme pocket.

It belongs to the cytochrome P450 family. The cofactor is heme.

It is found in the membrane. It participates in secondary metabolite biosynthesis; terpenoid biosynthesis. In terms of biological role, cytochrome P450 monooxygenase; part of the gene cluster that mediates the biosynthesis of conidiogenone, a diterpene known to induce the conidiation. The bifunctional terpene synthase PrDS converts isopentenyl diphosphate (IPP) and dimethylallyl diphosphate (DMAPP) into deoxyconidiogenol. The C-terminal prenyltransferase (PT) domain of PrDS catalyzes formation of GGPP, whereas the N-terminal terpene cyclase (TC) domain catalyzes the cyclization of GGPP into deoxyconidiogenol. The cytochrome P450 monooxygenase PrP450 then catalyzes two rounds of oxidation to furnish conidiogenone. This Penicillium rubens (strain ATCC 28089 / DSM 1075 / NRRL 1951 / Wisconsin 54-1255) (Penicillium chrysogenum) protein is Conidiogenone synthase PchP450.